The chain runs to 380 residues: Cobalt-precorrin-5B C(1)-methyltransferase (380 aa).

It belongs to the CbiD family.

The catalysed reaction is Co-precorrin-5B + S-adenosyl-L-methionine = Co-precorrin-6A + S-adenosyl-L-homocysteine. It participates in cofactor biosynthesis; adenosylcobalamin biosynthesis; cob(II)yrinate a,c-diamide from sirohydrochlorin (anaerobic route): step 6/10. Catalyzes the methylation of C-1 in cobalt-precorrin-5B to form cobalt-precorrin-6A. This is Cobalt-precorrin-5B C(1)-methyltransferase from Salinispora arenicola (strain CNS-205).